A 411-amino-acid chain; its full sequence is Peptide chain release factor subunit 1 (411 aa).

It belongs to the eukaryotic release factor 1 family. In terms of assembly, heterodimer of two subunits, one of which binds GTP.

Its subcellular location is the cytoplasm. In terms of biological role, directs the termination of nascent peptide synthesis (translation) in response to the termination codons UAA, UAG and UGA. The sequence is that of Peptide chain release factor subunit 1 from Methanosphaera stadtmanae (strain ATCC 43021 / DSM 3091 / JCM 11832 / MCB-3).